The chain runs to 227 residues: Ribose-5-phosphate isomerase A (227 aa).

Substrate is bound by residues 28 to 31 (TGST), 85 to 88 (DGAD), and 98 to 101 (KGGG). The active-site Proton acceptor is Glu107. Residue Lys125 coordinates substrate.

It belongs to the ribose 5-phosphate isomerase family. In terms of assembly, homodimer.

The enzyme catalyses aldehydo-D-ribose 5-phosphate = D-ribulose 5-phosphate. It functions in the pathway carbohydrate degradation; pentose phosphate pathway; D-ribose 5-phosphate from D-ribulose 5-phosphate (non-oxidative stage): step 1/1. In terms of biological role, catalyzes the reversible conversion of ribose-5-phosphate to ribulose 5-phosphate. This chain is Ribose-5-phosphate isomerase A, found in Limosilactobacillus reuteri (strain DSM 20016) (Lactobacillus reuteri).